Consider the following 390-residue polypeptide: Flagellar P-ring protein (390 aa).

Residues 1 to 25 (MLLKKIFLTGIIVLDLVFFVSYGFA) form the signal peptide.

It belongs to the FlgI family. In terms of assembly, the basal body constitutes a major portion of the flagellar organelle and consists of four rings (L,P,S, and M) mounted on a central rod.

The protein localises to the periplasm. It localises to the bacterial flagellum basal body. Its function is as follows. Assembles around the rod to form the L-ring and probably protects the motor/basal body from shearing forces during rotation. The sequence is that of Flagellar P-ring protein from Syntrophus aciditrophicus (strain SB).